Here is a 907-residue protein sequence, read N- to C-terminus: Polyphosphoinositide phosphatase (907 aa).

Residues 154 to 547 (FQNVDLSSNF…GDTLSLQYGG (394 aa)) form the SAC domain. The segment at 707–788 (GIDPSPFTVR…VKMTDAGDSA (82 aa)) is disordered. Residues 758-770 (SEDDSGTDREEEG) are compositionally biased toward acidic residues.

In terms of assembly, component of the PI(3,5)P2 regulatory complex/PAS complex, at least composed of PIKFYVE, FIG4 and VAC14. VAC14 nucleates the assembly of the complex and serves as a scaffold by pentamerizing into a star-shaped structure, which can bind a single copy each of PIKFYVE and FIG4 and coordinates their activities.

It is found in the endosome membrane. The enzyme catalyses a 1,2-diacyl-sn-glycero-3-phospho-(1D-myo-inositol-3,5-bisphosphate) + H2O = a 1,2-diacyl-sn-glycero-3-phospho-(1D-myo-inositol-3-phosphate) + phosphate. It carries out the reaction a 1,2-diacyl-sn-glycero-3-phospho-(1D-myo-inositol-4,5-bisphosphate) + H2O = a 1,2-diacyl-sn-glycero-3-phospho-(1D-myo-inositol 4-phosphate) + phosphate. The catalysed reaction is a 1,2-diacyl-sn-glycero-3-phospho-(1D-myo-inositol-3,4,5-trisphosphate) + H2O = a 1,2-diacyl-sn-glycero-3-phospho-(1D-myo-inositol-3,4-bisphosphate) + phosphate. It catalyses the reaction O-phospho-L-seryl-[protein] + H2O = L-seryl-[protein] + phosphate. Its function is as follows. Dual specificity phosphatase component of the PI(3,5)P2 regulatory complex which regulates both the synthesis and turnover of phosphatidylinositol 3,5-bisphosphate (PtdIns(3,5)P2). Catalyzes the dephosphorylation of phosphatidylinositol 3,5-bisphosphate (PtdIns(3,5)P2) to form phosphatidylinositol 3-phosphate. Has serine-protein phosphatase activity acting on PIKfyve to stimulate its lipid kinase activity, its catalytically activity being required for maximal PI(3,5)P2 production. In vitro, hydrolyzes all three D5-phosphorylated polyphosphoinositide and although displaying preferences for PtdIns(3,5)P2, it is capable of hydrolyzing PtdIns(3,4,5)P3 and PtdIns(4,5)P2, at least in vitro. This chain is Polyphosphoinositide phosphatase, found in Homo sapiens (Human).